The sequence spans 383 residues: ATP phosphoribosyltransferase regulatory subunit (383 aa).

Belongs to the class-II aminoacyl-tRNA synthetase family. HisZ subfamily. Heteromultimer composed of HisG and HisZ subunits.

The protein resides in the cytoplasm. It participates in amino-acid biosynthesis; L-histidine biosynthesis; L-histidine from 5-phospho-alpha-D-ribose 1-diphosphate: step 1/9. Its function is as follows. Required for the first step of histidine biosynthesis. May allow the feedback regulation of ATP phosphoribosyltransferase activity by histidine. This Desulfitobacterium hafniense (strain DSM 10664 / DCB-2) protein is ATP phosphoribosyltransferase regulatory subunit.